Consider the following 65-residue polypeptide: Large ribosomal subunit protein bL35 (65 aa).

It belongs to the bacterial ribosomal protein bL35 family.

This Phytoplasma mali (strain AT) protein is Large ribosomal subunit protein bL35.